Reading from the N-terminus, the 679-residue chain is Glycine--tRNA ligase beta subunit (679 aa).

It belongs to the class-II aminoacyl-tRNA synthetase family. In terms of assembly, tetramer of two alpha and two beta subunits.

It localises to the cytoplasm. The catalysed reaction is tRNA(Gly) + glycine + ATP = glycyl-tRNA(Gly) + AMP + diphosphate. The protein is Glycine--tRNA ligase beta subunit of Streptococcus agalactiae serotype Ia (strain ATCC 27591 / A909 / CDC SS700).